The following is a 348-amino-acid chain: 3-isopropylmalate dehydrogenase (348 aa).

76–87 (GPKWTDPNNRPE) provides a ligand contact to NAD(+). Positions 94, 104, 132, and 217 each coordinate substrate. Mg(2+)-binding residues include Asp217, Asp241, and Asp245. 275 to 287 (GSAPDIAGKNVAN) is an NAD(+) binding site.

It belongs to the isocitrate and isopropylmalate dehydrogenases family. LeuB type 1 subfamily. As to quaternary structure, homodimer. Mg(2+) serves as cofactor. Mn(2+) is required as a cofactor.

The protein localises to the cytoplasm. The enzyme catalyses (2R,3S)-3-isopropylmalate + NAD(+) = 4-methyl-2-oxopentanoate + CO2 + NADH. Its pathway is amino-acid biosynthesis; L-leucine biosynthesis; L-leucine from 3-methyl-2-oxobutanoate: step 3/4. Catalyzes the oxidation of 3-carboxy-2-hydroxy-4-methylpentanoate (3-isopropylmalate) to 3-carboxy-4-methyl-2-oxopentanoate. The product decarboxylates to 4-methyl-2 oxopentanoate. In Staphylococcus aureus (strain COL), this protein is 3-isopropylmalate dehydrogenase.